A 112-amino-acid chain; its full sequence is Peptidyl-tRNA hydrolase (112 aa).

Belongs to the PTH2 family.

The protein resides in the cytoplasm. It carries out the reaction an N-acyl-L-alpha-aminoacyl-tRNA + H2O = an N-acyl-L-amino acid + a tRNA + H(+). Functionally, the natural substrate for this enzyme may be peptidyl-tRNAs which drop off the ribosome during protein synthesis. The chain is Peptidyl-tRNA hydrolase from Haloquadratum walsbyi (strain DSM 16790 / HBSQ001).